A 567-amino-acid polypeptide reads, in one-letter code: NAC domain-containing protein 78 (567 aa).

Residues leucine 9–lysine 159 form the NAC domain. Residues valine 108 to lysine 165 mediate DNA binding. The disordered stretch occupies residues asparagine 393–aspartate 436. Over residues leucine 397 to glycine 423 the composition is skewed to basic and acidic residues. Residues leucine 544–valine 564 traverse the membrane as a helical segment.

Expressed in root meristem. Expressed in roots, rosette leaves, cauline leaves, shoot apex, stems and flowers.

Its subcellular location is the membrane. It is found in the nucleus. In terms of biological role, transcriptional activator activated by proteolytic cleavage through regulated intramembrane proteolysis (RIP). Transcripition activator associated with the induction of genes related to flavonoid biosynthesis and required for the accumulation of anthocyanins in response to high light stress. Plays a role in the regulation of 20S and 26S proteasomes in response to high light stress. The sequence is that of NAC domain-containing protein 78 (NAC078) from Arabidopsis thaliana (Mouse-ear cress).